A 346-amino-acid polypeptide reads, in one-letter code: MSDNKTSLSYKDAGVDIDAGNALVDRIKGVVKRTRRPEVMGGIGGFGALCELPTKYKQPLLVSGTDGVGTKLRLALDLNKHDTIGIDLVAMCVNDLIVQGAEPLFFLDYYATGKLDVDVAAEVVTGIGEGCIQAGCALIGGETAEMPGMYEGEDYDVAGFCVGVVEKEDVIDGTKVAAGDALIAVGSSGPHSNGYSLIRKILEVSNADLNEELNGKTIAAHLIEPTKIYIKSALKMIAEHDIHAISHITGGGFWENIPRVLPQGTKAVVDGSSWEWPAIFNWLQEKGNVDTYEMYRTFNCGVGLVVALPKEQAEQAVALLNAEGENAWVIGEIAAAEQGEEQVEIR.

It belongs to the AIR synthase family.

It localises to the cytoplasm. The catalysed reaction is 2-formamido-N(1)-(5-O-phospho-beta-D-ribosyl)acetamidine + ATP = 5-amino-1-(5-phospho-beta-D-ribosyl)imidazole + ADP + phosphate + H(+). The protein operates within purine metabolism; IMP biosynthesis via de novo pathway; 5-amino-1-(5-phospho-D-ribosyl)imidazole from N(2)-formyl-N(1)-(5-phospho-D-ribosyl)glycinamide: step 2/2. In Aliivibrio fischeri (strain ATCC 700601 / ES114) (Vibrio fischeri), this protein is Phosphoribosylformylglycinamidine cyclo-ligase.